The following is a 312-amino-acid chain: D-alanine--D-alanine ligase (312 aa).

In terms of domain architecture, ATP-grasp spans 108-308; the sequence is KLVWQQTGIP…YSELVVKVLS (201 aa). Position 138–193 (138–193) interacts with ATP; the sequence is VAKLGMPLFVKPASEGSSVAVEKVKSADALPAALEEAAKHDKIVIVEKSIEGGGEY. Mg(2+)-binding residues include aspartate 262, glutamate 275, and asparagine 277.

Belongs to the D-alanine--D-alanine ligase family. The cofactor is Mg(2+). Mn(2+) is required as a cofactor.

The protein localises to the cytoplasm. The catalysed reaction is 2 D-alanine + ATP = D-alanyl-D-alanine + ADP + phosphate + H(+). It participates in cell wall biogenesis; peptidoglycan biosynthesis. Its function is as follows. Cell wall formation. This chain is D-alanine--D-alanine ligase, found in Burkholderia thailandensis (strain ATCC 700388 / DSM 13276 / CCUG 48851 / CIP 106301 / E264).